The primary structure comprises 511 residues: ATP synthase subunit alpha (511 aa).

169–176 (GDRQTGKT) is a binding site for ATP.

Belongs to the ATPase alpha/beta chains family. As to quaternary structure, F-type ATPases have 2 components, CF(1) - the catalytic core - and CF(0) - the membrane proton channel. CF(1) has five subunits: alpha(3), beta(3), gamma(1), delta(1), epsilon(1). CF(0) has three main subunits: a(1), b(2) and c(9-12). The alpha and beta chains form an alternating ring which encloses part of the gamma chain. CF(1) is attached to CF(0) by a central stalk formed by the gamma and epsilon chains, while a peripheral stalk is formed by the delta and b chains.

It localises to the cell inner membrane. The catalysed reaction is ATP + H2O + 4 H(+)(in) = ADP + phosphate + 5 H(+)(out). Its function is as follows. Produces ATP from ADP in the presence of a proton gradient across the membrane. The alpha chain is a regulatory subunit. This chain is ATP synthase subunit alpha, found in Bartonella bacilliformis (strain ATCC 35685 / KC583 / Herrer 020/F12,63).